A 260-amino-acid chain; its full sequence is MQALAEQTETKNVYDVLDFNLWYGNNQALKNISLQLKEKHVTAIIGPSGCGKSTFIKTLNLMSRLNPDIRMAGELNFRGENLLTTSMDLAELRKAVGMVFQKPNPFPKSIYENVAYGPRIHGIRKKKELDEIVESSLKGAFLWEEVKDRLNKNALSLSGGQQQRLCIARALATKPEVLLMDEPTSALDPISTTKVEELITSLRDSYTIVIVTHNMQQAARISDETAFFYMGELVEIGPTQRIFSNPEHKRTEDYVSGQFG.

The 248-residue stretch at 8–255 folds into the ABC transporter domain; it reads TETKNVYDVL…PEHKRTEDYV (248 aa). 46-53 lines the ATP pocket; the sequence is GPSGCGKS.

This sequence belongs to the ABC transporter superfamily. Phosphate importer (TC 3.A.1.7) family. In terms of assembly, the complex is composed of two ATP-binding proteins (PstB), two transmembrane proteins (PstC and PstA) and a solute-binding protein (PstS).

The protein localises to the cell membrane. It catalyses the reaction phosphate(out) + ATP + H2O = ADP + 2 phosphate(in) + H(+). Functionally, part of the ABC transporter complex PstSACB involved in phosphate import. Responsible for energy coupling to the transport system. This Shouchella clausii (strain KSM-K16) (Alkalihalobacillus clausii) protein is Phosphate import ATP-binding protein PstB 1.